The chain runs to 286 residues: Glycine--tRNA ligase alpha subunit (286 aa).

It belongs to the class-II aminoacyl-tRNA synthetase family. In terms of assembly, tetramer of two alpha and two beta subunits.

The protein localises to the cytoplasm. It carries out the reaction tRNA(Gly) + glycine + ATP = glycyl-tRNA(Gly) + AMP + diphosphate. This Thermotoga petrophila (strain ATCC BAA-488 / DSM 13995 / JCM 10881 / RKU-1) protein is Glycine--tRNA ligase alpha subunit.